The sequence spans 300 residues: Zinc finger protein 705B (300 aa).

The KRAB domain occupies 7 to 78; sequence VTFEDVAIDF…GRVFLQDQNP (72 aa). 3 consecutive C2H2-type zinc fingers follow at residues 172–194, 200–222, and 228–250; these read YQCN…KMTH, YACH…EKTH, and YKCH…ERTH. Residues 256-278 form a C2H2-type 4; degenerate zinc finger; sequence YECDKSGKAFSQSSGFRGNKIIH.

The protein belongs to the krueppel C2H2-type zinc-finger protein family.

Its subcellular location is the nucleus. Its function is as follows. May be involved in transcriptional regulation. The chain is Zinc finger protein 705B (ZNF705B) from Homo sapiens (Human).